The following is a 257-amino-acid chain: Fructose-2,6-bisphosphatase TIGAR B (257 aa).

The active-site Tele-phosphohistidine intermediate is the His-11. Catalysis depends on Glu-89, which acts as the Proton donor/acceptor.

The protein belongs to the phosphoglycerate mutase family.

It is found in the cytoplasm. It localises to the nucleus. The protein localises to the mitochondrion. The catalysed reaction is beta-D-fructose 2,6-bisphosphate + H2O = beta-D-fructose 6-phosphate + phosphate. Its function is as follows. Fructose-bisphosphatase hydrolyzing fructose-2,6-bisphosphate as well as fructose-1,6-bisphosphate. Acts as a negative regulator of glycolysis by lowering intracellular levels of fructose-2,6-bisphosphate in a p53/TP53-dependent manner, resulting in the pentose phosphate pathway (PPP) activation and NADPH production. Contributes to the generation of reduced glutathione to cause a decrease in intracellular reactive oxygen species (ROS) content, correlating with its ability to protect cells from oxidative or metabolic stress-induced cell death. May play a role in mitophagy inhibition. The polypeptide is Fructose-2,6-bisphosphatase TIGAR B (Danio rerio (Zebrafish)).